The sequence spans 385 residues: Nod factor hydrolase protein 1 (385 aa).

Residues 1-21 form the signal peptide; sequence MANFLKLKQFLTLVLILLALA. One can recognise a GH18 domain in the interval 36–385; that stretch reads RVKGIYWIEN…TASKAWRPES (350 aa). Asn-115 and Asn-134 each carry an N-linked (GlcNAc...) asparagine glycan. The active-site Proton donor is the Glu-153. N-linked (GlcNAc...) asparagine glycans are attached at residues Asn-233 and Asn-247.

It belongs to the glycosyl hydrolase 18 family. Chitinase class V subfamily.

Symbiotic enzyme that hydrolytically inactivates Nod factors (NFs) with a C16:2 acyl chain produced by the microsymbiont Sinorhizobium meliloti. NFs are lipo-chitooligosaccharide signaling molecules produced by nitrogen-fixing rhizobia to initiate nodulation (symbiosis) on the roots of legumes. Controls NF hydrolysis at the stage of root hair infection. Involved in the regulation of growth and branching of mature nodules. Modulates NF levels and signaling to complete transition of infected nodules to functional nitrogen-fixing organs. Lacks chitinase activity in vitro toward glycol chitin, carboxymethyl-chitin, colloidal chitin, and the chitin oligosaccharides (N-acetylglucosamine) (GlcNAc)6 and (GlcNAc)5. This is Nod factor hydrolase protein 1 from Medicago truncatula (Barrel medic).